Here is a 304-residue protein sequence, read N- to C-terminus: tRNA pseudouridine synthase B (304 aa).

The Nucleophile role is filled by aspartate 41.

Belongs to the pseudouridine synthase TruB family. Type 1 subfamily.

The enzyme catalyses uridine(55) in tRNA = pseudouridine(55) in tRNA. Its function is as follows. Responsible for synthesis of pseudouridine from uracil-55 in the psi GC loop of transfer RNAs. In Nitratidesulfovibrio vulgaris (strain ATCC 29579 / DSM 644 / CCUG 34227 / NCIMB 8303 / VKM B-1760 / Hildenborough) (Desulfovibrio vulgaris), this protein is tRNA pseudouridine synthase B.